The following is a 292-amino-acid chain: Elongation factor Ts (292 aa).

The segment at 79–82 (TDFV) is involved in Mg(2+) ion dislocation from EF-Tu.

This sequence belongs to the EF-Ts family.

It localises to the cytoplasm. Its function is as follows. Associates with the EF-Tu.GDP complex and induces the exchange of GDP to GTP. It remains bound to the aminoacyl-tRNA.EF-Tu.GTP complex up to the GTP hydrolysis stage on the ribosome. The chain is Elongation factor Ts from Xylella fastidiosa (strain 9a5c).